A 62-amino-acid polypeptide reads, in one-letter code: Large ribosomal subunit protein uL30 (62 aa).

The protein belongs to the universal ribosomal protein uL30 family. Part of the 50S ribosomal subunit.

In Dinoroseobacter shibae (strain DSM 16493 / NCIMB 14021 / DFL 12), this protein is Large ribosomal subunit protein uL30.